Reading from the N-terminus, the 204-residue chain is Holliday junction branch migration complex subunit RuvA (204 aa).

The segment at 1–64 (MIGRLQGILL…EDAHLLFGFA (64 aa)) is domain I. The tract at residues 65 to 143 (QKTDRTLFRE…GIKQSDFFVE (79 aa)) is domain II. Residues 144-155 (STHIPLSPSIES) are flexible linker. Residues 156 to 204 (HSESSSDEAISALIALGYKPAEAEKMVKRVAKPELTSEQVIREALKAAL) are domain III.

It belongs to the RuvA family. Homotetramer. Forms an RuvA(8)-RuvB(12)-Holliday junction (HJ) complex. HJ DNA is sandwiched between 2 RuvA tetramers; dsDNA enters through RuvA and exits via RuvB. An RuvB hexamer assembles on each DNA strand where it exits the tetramer. Each RuvB hexamer is contacted by two RuvA subunits (via domain III) on 2 adjacent RuvB subunits; this complex drives branch migration. In the full resolvosome a probable DNA-RuvA(4)-RuvB(12)-RuvC(2) complex forms which resolves the HJ.

It localises to the cytoplasm. Functionally, the RuvA-RuvB-RuvC complex processes Holliday junction (HJ) DNA during genetic recombination and DNA repair, while the RuvA-RuvB complex plays an important role in the rescue of blocked DNA replication forks via replication fork reversal (RFR). RuvA specifically binds to HJ cruciform DNA, conferring on it an open structure. The RuvB hexamer acts as an ATP-dependent pump, pulling dsDNA into and through the RuvAB complex. HJ branch migration allows RuvC to scan DNA until it finds its consensus sequence, where it cleaves and resolves the cruciform DNA. This is Holliday junction branch migration complex subunit RuvA from Haemophilus influenzae (strain 86-028NP).